A 251-amino-acid chain; its full sequence is 2-amino-5-chloromuconate deaminase (251 aa).

As to quaternary structure, monomer.

It catalyses the reaction (2Z,4E)-2-aminomuconate + H2O = (2Z,4E)-2-hydroxyhexa-2,4-dienedioate + NH4(+). It participates in xenobiotic degradation; 4-chloronitrobenzene degradation. It functions in the pathway xenobiotic degradation; nitrobenzene degradation. With respect to regulation, cysteine residue modifying agents such as p-chloromercuribenzoate and the SH-binding metals Zn(2+), Ni(2+) and Cu(2+) completely inhibit deaminase activity, whereas Ca(2+), Mg(2+) and the histidine residue-modifying agent diethyl pyrocarbonate inhibit the activity by 23 to 50%. Functionally, involved in the biodegradation of xenobiotic compounds, such as nitrobenzene and 4-chloronitrobenzene (4-CNB). CnbZ preferentially catalyzes the deamination of 2-amino-5-chloromuconate (2A5CM) to yield 2-hydroxy-5-chloromuconate (2H5CM). Also able to catalyze the deamination of 2-aminomuconate to yield 2-hydroxymuconate, which spontaneously converts into its keto form, 2-oxalocrotonate. The protein is 2-amino-5-chloromuconate deaminase of Comamonas testosteroni (Pseudomonas testosteroni).